The sequence spans 502 residues: Sodium/proline symporter (502 aa).

Helical transmembrane passes span P6–W26, L42–M62, I68–I88, I127–A147, A163–V183, S192–F212, F235–L255, T276–F296, I320–S340, L371–A391, L398–F418, A430–L450, and L452–L472.

The protein belongs to the sodium:solute symporter (SSF) (TC 2.A.21) family.

It localises to the cell inner membrane. The enzyme catalyses L-proline(in) + Na(+)(in) = L-proline(out) + Na(+)(out). Its function is as follows. Catalyzes the sodium-dependent uptake of extracellular L-proline. This Salmonella typhimurium (strain LT2 / SGSC1412 / ATCC 700720) protein is Sodium/proline symporter.